We begin with the raw amino-acid sequence, 1363 residues long: Zinc finger protein 541 (1363 aa).

2 disordered regions span residues 1–23 (MEPY…SFSE) and 106–137 (LGAL…SPQN). C2H2-type zinc fingers lie at residues 140–162 (LDCS…YLTH), 168–190 (HVCK…MLTH), and 196–221 (FVCI…EVQH). Disordered stretches follow at residues 232–269 (EEEA…GSVL), 286–387 (KIPS…GWPE), 440–532 (VASR…PGGL), and 574–741 (QVAT…GYRL). Residues 311–321 (SLGSSSCTPAS) are compositionally biased toward polar residues. The segment covering 335–345 (EETHPPRKEAA) has biased composition (basic and acidic residues). A compositionally biased stretch (low complexity) spans 453 to 465 (PSSTPTSVEPSPS). Residues 597-608 (GPWPPQTLPPAP) are compositionally biased toward pro residues. The segment covering 659–670 (PPSLTGPGLLPS) has biased composition (low complexity). A C2H2-type 4 zinc finger spans residues 838–860 (FVCKNCSQMFYTEKGLSSHMCFH). The segment at 935–978 (QGQEKDGEERDSKESCQYRKRKKRPQPKALFAPPAPSALGEPGP) is disordered. The segment covering 937–951 (QEKDGEERDSKESCQ) has biased composition (basic and acidic residues). In terms of domain architecture, ELM2 spans 1063–1155 (PHINVGSRFQ…VALETLLLRG (93 aa)). The SANT domain maps to 1170 to 1221 (TGSDIWTPMEKRLFKKAFCAHKKDFYLIHKMIQTKSVAQCVEYYYIWKKMVK). A disordered region spans residues 1243-1298 (RTEDKVTCSPRERPTHRPTPELKIKTKSYRRESILHSSPSAAPKRTPEPPGSVESQ). Over residues 1244 to 1276 (TEDKVTCSPRERPTHRPTPELKIKTKSYRRESI) the composition is skewed to basic and acidic residues. A C2H2-type 5 zinc finger spans residues 1301–1323 (FPCRECERVFDKIKSRNAHMKRH). The tract at residues 1343-1363 (LKEEEEEEEEELGADMGPLQW) is disordered. The span at 1345–1355 (EEEEEEEEELG) shows a compositional bias: acidic residues.

As to quaternary structure, interacts with DNTTIP1. Identified in a complex with KCTD19, HDAC1 and HSPA2. Identified in a complex with HDAC1, HDAC2, DNTTIP1 and KCTD19. Identified in a complex with KCTD19 and HDAC1. Germ-cell-specific. Specifically present in testicular spermatogenic cells, but not in testicular and mature sperm. During spermatogenesis, it is present in spermatocytes and round spermatids only (at protein level).

The protein localises to the nucleus. In terms of biological role, transcription regulator which is essential for male fertility and for the completion of meiotic prophase in spermatocytes. Regulates progression of the pachytene stage of meiotic prophase by activating the expression of genes involved in meiosis and post-meiosis during spermatogenesis. Maintains the repression of pre-pachytene transcriptional programs, including meiotic double-strand breaks (DSB) formation genes in pachytene spermatocytes and suppresses aberrant DSB formation after mid-pachytene, thus ensuring meiosis progression. The polypeptide is Zinc finger protein 541 (Znf541) (Mus musculus (Mouse)).